The sequence spans 538 residues: Atos homolog protein B (538 aa).

Disordered stretches follow at residues 1–103 (MRHV…GLVS), 130–149 (GSAT…PSSN), 163–185 (PDQG…QLHT), and 199–272 (KSPV…LGCP). The segment covering 130 to 148 (GSATSSWTSGTQSTPWPSS) has biased composition (low complexity). Residues 227-238 (HTPPGPGPPGPC) show a composition bias toward pro residues. 2 positions are modified to phosphoserine: Ser-254 and Ser-255. Residues 348 to 430 (LLGNFEESLL…VPKVGTIQVT (83 aa)) form a required for macropage invasion region. The transactivation domain 1 (TAD1) stretch occupies residues 436–444 (QTVVKMFLV).

This sequence belongs to the ATOS family.

Its subcellular location is the nucleus. Its function is as follows. Transcription regulator that may syncronize transcriptional and translational programs. The chain is Atos homolog protein B from Rattus norvegicus (Rat).